The following is a 704-amino-acid chain: Seven transmembrane domain-containing serine/threonine-protein kinase 2 (704 aa).

Over 1–5 the chain is Extracellular; that stretch reads MPSKE. Residues 6 to 26 form a helical membrane-spanning segment; that stretch reads FIIPLILLCFYSVNGFVAVIS. The Cytoplasmic segment spans residues 27 to 42; it reads SLVELFIHKASWNSIK. A helical transmembrane segment spans residues 43-63; it reads IFFYSLLILQCLCRCIIIGWG. The Extracellular portion of the chain corresponds to 64–76; sequence MIETVQGGEFYSN. A helical membrane pass occupies residues 77-97; it reads FPSLLFISYAGLVALQMIQFL. Topologically, residues 98 to 121 are cytoplasmic; the sequence is PNDNQYLLLSEGKKNNHKVKVGTN. The chain crosses the membrane as a helical span at residues 122-142; that stretch reads ILIFFNLFMYFGMFLLFGIAE. Over 143–185 the chain is Extracellular; the sequence is KQVGNSTSFNHHGNHNSTTSTSTDEIPLVSTEVGELYLFGDKD. 2 N-linked (GlcNAc...) asparagine glycosylation sites follow: Asn147 and Asn158. Residues 186-206 form a helical membrane-spanning segment; that stretch reads PIYIVLDCFYFVCLLLLLIFH. Residues 207–224 lie on the Cytoplasmic side of the membrane; the sequence is SYVGWKTYKRNKDLFGIK. Residues 225 to 245 traverse the membrane as a helical segment; the sequence is LNVIHLILLICIFIRSLLVII. At 246 to 265 the chain is on the extracellular side; that stretch reads DPSSPNNSILHIDTESWLIY. An N-linked (GlcNAc...) asparagine glycan is attached at Asn251. Residues 266–286 traverse the membrane as a helical segment; the sequence is IYTISYYVVGEIIPGMLLIVI. Residues 287–704 are Cytoplasmic-facing; it reads EFLLPYHKRK…WSIEKDSSSK (418 aa). The Protein kinase domain maps to 317–682; sequence IAIHELLGMG…SLGVKFHLAN (366 aa). ATP-binding positions include 323-331 and Lys350; that span reads LGMGGSGAM. Residue Asp506 is the Proton acceptor of the active site.

The protein belongs to the protein kinase superfamily. Ser/Thr protein kinase family.

It localises to the membrane. The enzyme catalyses L-seryl-[protein] + ATP = O-phospho-L-seryl-[protein] + ADP + H(+). It catalyses the reaction L-threonyl-[protein] + ATP = O-phospho-L-threonyl-[protein] + ADP + H(+). This chain is Seven transmembrane domain-containing serine/threonine-protein kinase 2 (7tmk2), found in Dictyostelium discoideum (Social amoeba).